The primary structure comprises 97 residues: Co-chaperonin GroES (97 aa).

The protein belongs to the GroES chaperonin family. In terms of assembly, heptamer of 7 subunits arranged in a ring. Interacts with the chaperonin GroEL.

It localises to the cytoplasm. Together with the chaperonin GroEL, plays an essential role in assisting protein folding. The GroEL-GroES system forms a nano-cage that allows encapsulation of the non-native substrate proteins and provides a physical environment optimized to promote and accelerate protein folding. GroES binds to the apical surface of the GroEL ring, thereby capping the opening of the GroEL channel. The chain is Co-chaperonin GroES from Aeromonas hydrophila subsp. hydrophila (strain ATCC 7966 / DSM 30187 / BCRC 13018 / CCUG 14551 / JCM 1027 / KCTC 2358 / NCIMB 9240 / NCTC 8049).